Consider the following 283-residue polypeptide: Protease HtpX (283 aa).

2 helical membrane passes run 4 to 24 and 33 to 53; these read ILLF…ILNV and GGIL…SLFL. Histidine 139 serves as a coordination point for Zn(2+). Glutamate 140 is a catalytic residue. A Zn(2+)-binding site is contributed by histidine 143. A run of 2 helical transmembrane segments spans residues 147–167 and 190–210; these read GDMV…IFLS and IYFL…SIIA. A Zn(2+)-binding site is contributed by glutamate 218.

Belongs to the peptidase M48B family. The cofactor is Zn(2+).

The protein resides in the cell inner membrane. This is Protease HtpX from Haemophilus influenzae (strain 86-028NP).